A 382-amino-acid polypeptide reads, in one-letter code: MRLLYGIRAHHDKIWSVSSHQKLPLLATGSSDKTSAIFRLSETEKFPRVTTLDDTHTRSIRSVMFKPPIDDTVVDENELLDPPTLAMGSFDAKLSVWQAELPQDNDEDMDQEPREIWKQERKVVERAAQWELMAVIEGHEHEVKAVAWNCHGSLVASCSRDKTIWIWETDPDTLEEFECISVLTEHQQDVKHVIWHPTQNLLASSSYDDTICIYRQEYDDDDWGCAAVLNGHQGTVWCSAFEHPKSPSASETTVRLVSASDDLTVRIWSTSKEGSETNHDALPSSIKSSNEMQWDQECILPSAHTYPVYSVVWSSVSGRIASAGADGKIAVYKQTDGVWEIEGVTSAAHGVHEINTLAWSKLDDNREVLVSGGDDGYVNVWE.

WD repeat units lie at residues 9 to 48, 55 to 107, 138 to 178, 185 to 224, 231 to 278, 303 to 342, and 349 to 382; these read AHHD…KFPR, THTR…DNDE, GHEH…EEFE, EHQQ…DDWG, GHQG…SETN, AHTY…WEIE, and HGVH…NVWE.

It belongs to the WD repeat CIA1 family. As to quaternary structure, interacts with NAR1.

It localises to the cytoplasm. It is found in the nucleus. Essential component of the cytosolic iron-sulfur (Fe/S) protein assembly machinery. Required for the maturation of extramitochondrial Fe/S proteins. The chain is Probable cytosolic iron-sulfur protein assembly protein 1 from Meyerozyma guilliermondii (strain ATCC 6260 / CBS 566 / DSM 6381 / JCM 1539 / NBRC 10279 / NRRL Y-324) (Yeast).